A 672-amino-acid polypeptide reads, in one-letter code: Putative per-hexamer repeat protein 5 (672 aa).

Gly residues-rich tracts occupy residues 141 to 161, 171 to 191, 215 to 233, 243 to 263, 273 to 295, 303 to 355, and 365 to 389; these read TGTG…GTGT, TDRG…GTGT, TGTG…GTDT, and TGTG…GSGS. Disordered regions lie at residues 141 to 193 and 213 to 672; these read TGTG…GTGT and TGTG…TGTA. Residues 390–424 show a composition bias toward low complexity; the sequence is GTAKVTGTATTTATVTETGTAKVTGTDTGTAKVTG. Positions 425-469 are enriched in gly residues; sequence TGTGTGTGTGTGTGTGTGTGTGTGTGTGTGTGTGTGTGTGTGSGS. A compositionally biased stretch (low complexity) spans 470-486; that stretch reads GTAKVTGTDTGTAKVTG. Gly residues predominate over residues 487–537; that stretch reads TGTGTGTGTGTGTGTGTGTGTGTGSGSGSGSGSGSGSGTGTGTGLGSGSGS. The span at 538 to 552 shows a compositional bias: low complexity; it reads GTAKVTGTGTAKVTG. A compositionally biased stretch (gly residues) spans 553–617; the sequence is TGTGTGTGTG…GTGTGTGTGT (65 aa). Residues 618 to 636 are compositionally biased toward low complexity; it reads GTSTVTVRGTGTGTATATG. Gly residues-rich tracts occupy residues 637–653 and 663–672; these read TGTG…GTGT and RGTGTGTGTA.

This is Putative per-hexamer repeat protein 5 (Phxr5) from Mus musculus (Mouse).